Reading from the N-terminus, the 93-residue chain is Acylphosphatase (93 aa).

The 87-residue stretch at 6-92 (RAHVWVGGKV…EGLTHFEVLR (87 aa)) folds into the Acylphosphatase-like domain. Residues Arg-21 and Asn-39 contribute to the active site.

Belongs to the acylphosphatase family.

It catalyses the reaction an acyl phosphate + H2O = a carboxylate + phosphate + H(+). The polypeptide is Acylphosphatase (acyP) (Gloeobacter violaceus (strain ATCC 29082 / PCC 7421)).